Reading from the N-terminus, the 348-residue chain is MTTSGADGTKERRPVIALAMGDPAGISPELTARLLALSDIRDAAHIIAIGDRRILDEGARVAGVTLDLEAASLDALDNAGTARHVFVDLAHLDPADVVRGEATLAGGTFATRNFRTALELAHAGKADAVCFTPFNKKAMRFAYPGYDDEIRFVADVLSFTGKVREFNVLEKVWNARVTSHIPLKDVASHLSVEAILAELKLTQACLKDAGYEEAKIAVAGLNPHAGDGGSFGMEEIDIIEPAVEKARALGFNVEGPFPADTVFLRALKEGFNAVMTMYHDQGQIAMKIIGFDKGVTMMGGLPFPLCTPAHGTAYDIAGKGIADIGATREAILLAARMAKKKRALSAAA.

Residues His-180, His-224, and His-279 each contribute to the a divalent metal cation site.

It belongs to the PdxA family. As to quaternary structure, homodimer. Zn(2+) serves as cofactor. Mg(2+) is required as a cofactor. The cofactor is Co(2+).

The protein resides in the cytoplasm. It carries out the reaction 4-(phosphooxy)-L-threonine + NAD(+) = 3-amino-2-oxopropyl phosphate + CO2 + NADH. The protein operates within cofactor biosynthesis; pyridoxine 5'-phosphate biosynthesis; pyridoxine 5'-phosphate from D-erythrose 4-phosphate: step 4/5. In terms of biological role, catalyzes the NAD(P)-dependent oxidation of 4-(phosphooxy)-L-threonine (HTP) into 2-amino-3-oxo-4-(phosphooxy)butyric acid which spontaneously decarboxylates to form 3-amino-2-oxopropyl phosphate (AHAP). The sequence is that of Putative 4-hydroxythreonine-4-phosphate dehydrogenase 2 from Rhizobium meliloti (strain 1021) (Ensifer meliloti).